A 353-amino-acid chain; its full sequence is Uroporphyrinogen decarboxylase (353 aa).

Substrate contacts are provided by residues 29 to 33, Phe48, Asp78, Tyr154, Ser209, and His322; that span reads RQAGR.

Belongs to the uroporphyrinogen decarboxylase family. Homodimer.

Its subcellular location is the cytoplasm. It carries out the reaction uroporphyrinogen III + 4 H(+) = coproporphyrinogen III + 4 CO2. It participates in porphyrin-containing compound metabolism; protoporphyrin-IX biosynthesis; coproporphyrinogen-III from 5-aminolevulinate: step 4/4. Its function is as follows. Catalyzes the decarboxylation of four acetate groups of uroporphyrinogen-III to yield coproporphyrinogen-III. The sequence is that of Uroporphyrinogen decarboxylase (hemE) from Bacillus subtilis (strain 168).